We begin with the raw amino-acid sequence, 2824 residues long: MSPTAEIPKPVAVVGISAEFPSGTLSDANFDHQSFFDFLLSGKDAVERIPKDRFNIDGWQGSHLGQILPEDACFLKNVHLFDHFEFGISSKDALTMGAGTRKLVEHSFLALLDSGINCRSQNVAAFSSAVAFDLLSAADADEFEPRDGFGGGAAAVANRISYQLDLLGPSIPVDTACSSSLMALHLGVQSLRAGECEAAVIGGSQINHRFLDWIFYSQLSILSPGGKSIPFDSSADGFGRGEAVVVLVVKLLEDAIRDGDKIYATVLNTAVNSTGSAGPVKTPIAESQAAAMLTAYKGIGRSPSEADFIECHATGTSVGDPVEANWVGNHFKRDSELLIGSVKGNVGHTEITSFLTSFSKVISMFDTNRIPPQANFKEPNPAIHWEEYNMRTPTQIEGFTTRNPSGKRLASINASGLLGANGHVIAESPPPKAAKPSALPTGMPVLLMAAGLSPRSTTAIAADLSKLASEIPDELPILSNIFGRRARQLTWRAAAISTSDGPFVFPAPRFVPRGTPQLVFVFSGQGPQHIEMGRQLFKYYPVFRDSILKMDKVHVELTGKSIVKDLGFFGETRSSTALPDVWPVGLTVPSIAMIQMALVDLLAAFGIRPNLVFGHSAGEAAMSYTSGALPQELAMEIAVRRSQAMSIVEGSGGMAAVSCAPSVAREIVQEVLDEAGPDSGVLEIGCFNAPEAFTISGTHALLDKAVAIASGRGLFARKIKARVPGHCTLMEPCKERYVEQMEVAFSRYPGAHVPVVPTFSTQTGARWESEFTPEYMWNNGRVPVQFEQTVTAVVQEMPEAIFVEIGPHPALSSYISGMGAKPDKVVCPMRRVKNVTGFNEIFELLTAVGNLSTLGVNTINFHAVNATDCLEISKPIPAYPFAPKTMPFYSESSELAVKMKRSRKGPLNYDTLAVNALTHPDLAEHVIKGEPILPATGFFEMIFEEGARTIWDIELRSLLPLLPEKVLNVNVKSDGHAWSIVSSSGGRNPRLHATGFMTTEVMDKDAGPIDLAAIRARTTPADISNLYAILNNTAAFGPLYRRIEACYEGDHEILYQVRGNAPELTAHYNYVFHPSLLDSCIHGLLHPVFTGNADKSVFYLPSHIGRVTLYDRAIEEAVPETLYSYVVPHDWTPDSIACDAFIVNERGERLVTLIDCVLSKHWTGAVPTRPDTSYEYIYQPLGLPAAELVKSEAQQQDYAFLDAIVAHADEKVAPPSANGHANGHANGSANGSAVGTVGEDRKVFEEIVQSIASDELELKASSILGLFSASLDAPVAAVRQILDHAAKSGKQVVRILDIGDATASLYKQINAFASEYPSLRVDYTACGHEHATLDLRLASYNVDNVSKQAGLSPSTYDVIIETHTLGFAAELDRSLEYLHGLLLPGGFLVALEANGSAQASGGKWIDQVFSPQGRWSGLRSGKQHHRLSQSEWSGQLQKAKFQVVDGAQDAENTLFLTLLAQKHSLSTVSASSAASSAKVEEPAVFSFDHSRVLDLQKTVLASMSSGASNTKLWIESTTGTFDGAVATGFARSLMRELVAVDVRLVLFDPAWKAESRIPAIRQLSTLPSLESEIVLDASGVVMVPRLRSYAPRAPDSLDTTKYWVVDETKTVVQPAQPLPGPHQVLVKISSLSEAEGGLRGIVGTVARSGSSQWPVGAHVVTVAPSALSNFTLVHEGQLAQAPQTADEHSTAKVALLLVFAALGLRLDSRPLQSLQQIKVVVIHTGTVASSLARLLEYLGVKPVLVAPSLPLLLPRLSPGDVIIGGLSAAFARTVPRINGVSVFNWEDPEQGALAAVAQNPWLVGTTVDAHLARALPQVSVEGSSLTPDQLLPSDFSVSQSLALADDKTYLVLGGIGSLGLQIAIWMYQKGARHIVLTSRTGVSRLAGTKNRSLRGAVEYLKTLPDLELRLEPCDASSEESLSKLISSLDRPLAGAMLTAAVMADGLFLKQSADTYPIPFKPKTDAYFAFEKVVDIKKLDFLLAVSSVAGFGAAGQTNYASANTGIEYLTARYPNAWSFVAPGIADSNVGFDLFTSTNSHLEQWESSTMNSYEICLCLEDGLLRMANNERISIYVPNLNWDAISQSVSESVLYNHLVKLDAATDELEVEDPYEVLQEIVLKFVDASEEEFERNVPLTSYGLDSLSAARMSTALKPYLAITQIQLLGDLSLDDLVEKMQATKHVAVEETAVSTAEKPFAWDAMHQPGQTILKFNIGSGTPLIILHGGAGDTAAFRAIQEQFSTPLWAIQPTPEAPLDTVDTLAQFYFEKIKEARPAGPYRIAGFSASSMVTLRLAQLLEANEDEIAQLTFVDHFPLFFTSAIHGFTEDHKTFEDLTAYGRKASVALVAECCRRDTATARRLYGENLVAASNGQPSATNAMESWEWIQKTTRMNLKQVVDFGGGWEAWASSDATTRMEAARRRMVEEIAKVKAPMNVMIANWGIRALINSEWTDLGISRGGREVRTQYYDAGHFDIFEKPDFSRNLEFDWVDPHPVHQLATMIHNPAMNDLRALFKILDTKALQVMADTISQNPVVGSEISRQRLFEVCKEFVRTQKHSTWTDEEYEHSKALFPTYFETTERISKVHPSIMESPAAAVGALYSDDMIDGFYRQNKVFTSMNQEAAKTFKALVSSPDFGKQRPIRVLEVGAGVGGLTKFLVEALCDMPNADVEYTVTDLSYTLASSLAESFSYKNMVAKMYDLSKKPSEQGLQLGHYDVITGLNVIHAVPDLNATLTDLHSLLAPGGRILIVDTDGTARTSNPPRPGAIWNDFIWGSFQGWFGYTDDRTHCTIDEDEWRKRLTATGYSNVQVCHEDAGTCILFEAEKV.

The region spanning 8 to 428 (PKPVAVVGIS…GANGHVIAES (421 aa)) is the Ketosynthase family 3 (KS3) domain. Active-site for beta-ketoacyl synthase activity residues include C177, H312, and H348. Residues 517 to 854 (QLVFVFSGQG…LTAVGNLSTL (338 aa)) are malonyl-CoA:ACP transacylase (MAT) domain. Catalysis depends on S616, which acts as the For malonyltransferase activity. The segment at 886-1004 (MPFYSESSEL…GFMTTEVMDK (119 aa)) is N-terminal hotdog fold. In terms of domain architecture, PKS/mFAS DH spans 886–1168 (MPFYSESSEL…SKHWTGAVPT (283 aa)). The tract at residues 894–1083 (ELAVKMKRSR…PSLLDSCIHG (190 aa)) is dehydratase (DH) domain. Catalysis depends on H925, which acts as the Proton acceptor; for dehydratase activity. Residues 1018–1168 (TTPADISNLY…SKHWTGAVPT (151 aa)) are C-terminal hotdog fold. Catalysis depends on D1078, which acts as the Proton donor; for dehydratase activity. Residues 1101 to 1449 (PSHIGRVTLY…KFQVVDGAQD (349 aa)) are methyltransferase (CMet) domain. The disordered stretch occupies residues 1213 to 1232 (APPSANGHANGHANGSANGS). Positions 1518–1840 (TGTFDGAVAT…LPSDFSVSQS (323 aa)) are enoyl reductase (ER) domain. Residues 1842–2096 (ALADDKTYLV…SESVLYNHLV (255 aa)) are ketoreductase (KR) domain. The Carrier domain occupies 2109-2196 (DPYEVLQEIV…TAVSTAEKPF (88 aa)). The tract at residues 2200–2414 (AMHQPGQTIL…WASSDATTRM (215 aa)) is thioesterase (TE) domain. The methyltransferase (CMet) domain stretch occupies residues 2608–2809 (YRQNKVFTSM…ATGYSNVQVC (202 aa)).

Its pathway is mycotoxin biosynthesis. In terms of biological role, highly reducing polyketide synthase; part of the gene cluster that mediates the biosynthesis of strobilurin A, an antifungal polyketide that contains a key beta-methoxyacrylate toxophore that targets the complex III of the mitochondrial electron transport chain. Strobilurin biosynthesis begins with construction of benzoyl CoA by step-wise elimination of ammonia from phenylalanine by the phenylalanine ammonia-lyase str11, oxygenation by str8 and retro-Claisen reaction to form benzoic acid, which is activated to its CoA thiolester benzoyl CoA by the dedicated CoA ligase str10. Benzoyl CoA forms the starter unit for the highly reducing polyketide synthase stpks1 that produces the polyketide prestrobilutin A. The FAD-dependent oxygenase str9 then catalyzes the key oxidative rearrangement responsible for the creation of the beta-methoxyacrylate toxophore. Str9 performs epoxidation of the 2,3 olefin of prestrobilutin A, followed by Meinwald rearrangement to furnish the aldehyde intermediate. Rapid enolization of the aldehyde intermediate would give the beta-methoxyacrylate skeleton and methylations catalyzed by str2 and str3 complete the synthesis and lead to the production of strobilurin A. The short-chain dehydrogenase stl2 and the dehydrogenase str4 play a role in the shunt pathway leading to the production of bolineol. The cluster encodes no obvious halogenase gene that could be involved in production of strobilurin B, nor any obvious dimethylallyl-transferase that could be involved in the production of strobilurin G. It is possible that unknown proteins encoded in, or near, the cluster (such as str1 or stl1) may form new classes of halogenases or dimethylally-transferases, or that the responsible genes are located elsewhere on the genome. Similarly, proteins encoded by str5/str6 hydrolases appear to have no chemical role in the biosynthesis of strobilurin A. Finally, no obvious self-resistance gene is found within the cluster. This is Highly reducing polyketide synthase stpks1 from Strobilurus tenacellus.